A 146-amino-acid chain; its full sequence is Ribonuclease P protein component (146 aa).

Belongs to the RnpA family. Consists of a catalytic RNA component (M1 or rnpB) and a protein subunit.

It catalyses the reaction Endonucleolytic cleavage of RNA, removing 5'-extranucleotides from tRNA precursor.. In terms of biological role, RNaseP catalyzes the removal of the 5'-leader sequence from pre-tRNA to produce the mature 5'-terminus. It can also cleave other RNA substrates such as 4.5S RNA. The protein component plays an auxiliary but essential role in vivo by binding to the 5'-leader sequence and broadening the substrate specificity of the ribozyme. The chain is Ribonuclease P protein component from Helicobacter hepaticus (strain ATCC 51449 / 3B1).